A 402-amino-acid polypeptide reads, in one-letter code: Elongation factor Tu (402 aa).

A tr-type G domain is found at 10–212 (KPHINIGTIG…AVDEYIPEPK (203 aa)). The tract at residues 19–26 (GHVDHGKT) is G1. 19–26 (GHVDHGKT) is a binding site for GTP. Mg(2+) is bound at residue Thr-26. Positions 60–64 (GITIA) are G2. Residues 81-84 (DCPG) form a G3 region. GTP-binding positions include 81-85 (DCPGH) and 136-139 (NKED). Residues 136–139 (NKED) form a G4 region. The interval 177–179 (SAF) is G5.

Belongs to the TRAFAC class translation factor GTPase superfamily. Classic translation factor GTPase family. EF-Tu/EF-1A subfamily. Monomer.

It localises to the cytoplasm. It catalyses the reaction GTP + H2O = GDP + phosphate + H(+). Functionally, GTP hydrolase that promotes the GTP-dependent binding of aminoacyl-tRNA to the A-site of ribosomes during protein biosynthesis. The sequence is that of Elongation factor Tu from Sulfurovum sp. (strain NBC37-1).